The chain runs to 520 residues: Probable E3 ubiquitin-protein ligase rbrA (520 aa).

The span at 1-42 shows a compositional bias: acidic residues; that stretch reads MTDDEMYEDYDVDDDSAEESGNESLDDTEYDDAATQEFDFDE. Residues 1–51 form a disordered region; the sequence is MTDDEMYEDYDVDDDSAEESGNESLDDTEYDDAATQEFDFDENQPQRSLGK. The tract at residues 135 to 354 is TRIAD supradomain; the sequence is GNVSCLICLE…GGYYNCNKYD (220 aa). The Zn(2+) site is built by C139, C142, C156, H158, C161, C164, C184, C189, C228, C233, C250, C252, C257, C260, H268, C273, C300, and C303. The RING-type 1 zinc finger occupies 139 to 189; that stretch reads CLICLEDYPPTQTFALICNHRYCLPCYKNYLEIKVSEGPECIYTPCPAPKC. The segment at 208 to 273 adopts an IBR-type zinc-finger fold; sequence ERFNNFILKS…EIGDHMPCPC (66 aa). An RING-type 2; atypical zinc finger spans residues 300–333; that stretch reads CPECRSPIEKNGGCMHMTCRKNAGGCGFEFCWLC. Residue C313 is part of the active site. 6 residues coordinate Zn(2+): C318, C325, C330, C333, H340, and C350.

This sequence belongs to the RBR family.

The enzyme catalyses [E2 ubiquitin-conjugating enzyme]-S-ubiquitinyl-L-cysteine + [acceptor protein]-L-lysine = [E2 ubiquitin-conjugating enzyme]-L-cysteine + [acceptor protein]-N(6)-ubiquitinyl-L-lysine.. The protein operates within protein modification; protein ubiquitination. Functionally, might act as an E3 ubiquitin-protein ligase. Appears to be required for normal cell-type proportioning and cell sorting during multicellular development. In addition to being necessary for a normal percentage of prestalk cells and the organization of the slug, rbrA is also necessary for spore cell viability. This Dictyostelium discoideum (Social amoeba) protein is Probable E3 ubiquitin-protein ligase rbrA (rbrA).